Consider the following 107-residue polypeptide: Small integral membrane protein 19 (107 aa).

The chain crosses the membrane as a helical span at residues 25-43; the sequence is ATNVYLIVILVSFGLFMYA. Positions 88-107 are disordered; it reads RKYEYQQPQSQADSVQLSLE. Residues 93 to 107 are compositionally biased toward polar residues; it reads QQPQSQADSVQLSLE.

The protein belongs to the SMIM19 family.

Its subcellular location is the membrane. The sequence is that of Small integral membrane protein 19 (Smim19) from Mus musculus (Mouse).